The sequence spans 621 residues: MSFDISKFPVLAKANTPEELRKLPQGLLPQVSDELRQFLLQSVAISSGHFASGLGTVELTVALHYVYNTPFDQLVWDVGHQAYPHKILTDRREQMHTIRQKNGLHPFPWREESPYDTFSVGHSGTSVSAALGMAIAAGKEGVGRKVVAVIGDGAMTGGMVFEALNHAGDLHNDMLVVLNDNEMSISENVGALNNHLAQLMSGRFYTTIRENSKKVLKGMPVIKEMAKRTEEHLKGMVVPATLFEELGFNYIGPIDGHDVDSLVETMRNMRNLKGPQILHIMTKKGRGYEPAEKDPIGWHAVPKFDPSQFKKPTTKPGLPTFSQVFGKWLCDMAATDDKLVAITPAMREGSGMVEFSQRFPSQYFDAAIAEQHAVTLAAGFACAGLKPVVAIYSTFLQRGYDQLIHDVALQRLPVLFAIDRGGIVGADGPTHQGAFDLSFMRCIPNMIIMAPSDENECRQMLYTGYCYQDGPTAVRYPRGFATGAEQIDTMTMIPIGKGVLTRQGQKIAIVNFGTTLEAATDAAEKLDATIADMRFVKPLDLGLLEQLANSHDVIVTVEENAIMGGAGSGVIEALHKMRIVKPVLQIGLPDEFIKHGAPDEITAELQLDAQGILAQIQAFMA.

Residues H80 and 121-123 (GHS) contribute to the thiamine diphosphate site. D152 contributes to the Mg(2+) binding site. Thiamine diphosphate-binding positions include 153–154 (GA), N181, Y288, and E370. Residue N181 participates in Mg(2+) binding.

It belongs to the transketolase family. DXPS subfamily. In terms of assembly, homodimer. Requires Mg(2+) as cofactor. Thiamine diphosphate is required as a cofactor.

It carries out the reaction D-glyceraldehyde 3-phosphate + pyruvate + H(+) = 1-deoxy-D-xylulose 5-phosphate + CO2. It participates in metabolic intermediate biosynthesis; 1-deoxy-D-xylulose 5-phosphate biosynthesis; 1-deoxy-D-xylulose 5-phosphate from D-glyceraldehyde 3-phosphate and pyruvate: step 1/1. Its function is as follows. Catalyzes the acyloin condensation reaction between C atoms 2 and 3 of pyruvate and glyceraldehyde 3-phosphate to yield 1-deoxy-D-xylulose-5-phosphate (DXP). This Shewanella frigidimarina (strain NCIMB 400) protein is 1-deoxy-D-xylulose-5-phosphate synthase.